A 310-amino-acid chain; its full sequence is Putative S-adenosyl-L-methionine-dependent methyltransferase Franean1_4929 (310 aa).

The tract at residues 1–28 (MSRPSAPRGRTELRSIHERGHERGSAGV) is disordered. Positions 9–24 (GRTELRSIHERGHERG) are enriched in basic and acidic residues. Residues Asp136 and 165–166 (DL) contribute to the S-adenosyl-L-methionine site.

The protein belongs to the UPF0677 family.

Its function is as follows. Exhibits S-adenosyl-L-methionine-dependent methyltransferase activity. This chain is Putative S-adenosyl-L-methionine-dependent methyltransferase Franean1_4929, found in Parafrankia sp. (strain EAN1pec).